Reading from the N-terminus, the 80-residue chain is Conotoxin SIVB (80 aa).

Positions 1–21 (MGMRMMFTVFLSVVLATTVVS) are cleaved as a signal peptide. Residues 22–38 (TPSDRASDGRNAAVHER) constitute a propeptide that is removed on maturation. The residue at position 39 (Gln39) is a Pyrrolidone carboxylic acid. Ser45 carries O-linked (HexNAc...) serine glycosylation. 4-hydroxyproline is present on residues Pro55, Pro60, Pro61, Pro69, Pro72, and Pro75. At Pro75 the chain carries Proline amide. Residues 76–80 (GRRND) constitute a propeptide that is removed on maturation.

Belongs to the conotoxin A superfamily. Post-translationally, contains 3 disulfide bonds. O-linked glycan consists of Hex3-HexNAc2 pentasaccharide. Expressed by the venom duct.

It is found in the secreted. Functionally, neurotoxin with probable activity on sodium channel. Induces intense repetitive firing of the frog neuromuscular junction, leading to a tetanic contracture in muscle fiber (spastic paralysis). In vivo, shows the same effect as the whole venom when injected on fish prey. The chain is Conotoxin SIVB from Conus striatus (Striated cone).